Here is a 211-residue protein sequence, read N- to C-terminus: Ribosomal RNA small subunit methyltransferase G (211 aa).

Residues glycine 75, leucine 80, 130 to 131 (VE), and arginine 145 each bind S-adenosyl-L-methionine.

Belongs to the methyltransferase superfamily. RNA methyltransferase RsmG family.

The protein localises to the cytoplasm. The catalysed reaction is guanosine(527) in 16S rRNA + S-adenosyl-L-methionine = N(7)-methylguanosine(527) in 16S rRNA + S-adenosyl-L-homocysteine. Functionally, specifically methylates the N7 position of guanine in position 527 of 16S rRNA. This Aromatoleum aromaticum (strain DSM 19018 / LMG 30748 / EbN1) (Azoarcus sp. (strain EbN1)) protein is Ribosomal RNA small subunit methyltransferase G.